The chain runs to 839 residues: ABC transporter A family member 7 (839 aa).

Transmembrane regions (helical) follow at residues 30-50, 238-258, 286-306, 321-341, 352-372, 378-398, and 419-439; these read GVQI…KLWI, IASL…LPLF, IMTF…ISLI, FALF…AFFL, SIFG…LSLF, VFYY…LCGL, and ILFW…YLDK. The ABC transporter domain occupies 525-756; the sequence is LIVQGLRKQF…FGDGYSVRID (232 aa). 559–566 is a binding site for ATP; that stretch reads GPNGAGKT.

The protein belongs to the ABC transporter superfamily. ABCA family.

It is found in the membrane. The polypeptide is ABC transporter A family member 7 (abcA7) (Dictyostelium discoideum (Social amoeba)).